The primary structure comprises 419 residues: Endothiapepsin (419 aa).

The N-terminal stretch at 1-20 (MSSPLKNALVTAMLAGGALS) is a signal peptide. Residues 21 to 89 (SPTKQHVGIP…QNSTSGLAER (69 aa)) constitute a propeptide, activation peptide. The 312-residue stretch at 106–417 (YITPVQIGTP…GATTPTLGFA (312 aa)) folds into the Peptidase A1 domain. Active-site residues include Asp-124 and Ser-288. A disulfide bond links Cys-344 and Cys-379.

It belongs to the peptidase A1 family.

The catalysed reaction is Hydrolysis of proteins with specificity similar to that of pepsin A, prefers hydrophobic residues at P1 and P1', but does not cleave 14-Ala-|-Leu-15 in the B chain of insulin or Z-Glu-Tyr. Clots milk.. The protein is Endothiapepsin (EAPA) of Cryphonectria parasitica (Chestnut blight fungus).